A 201-amino-acid polypeptide reads, in one-letter code: 3-isopropylmalate dehydratase small subunit (201 aa).

It belongs to the LeuD family. LeuD type 1 subfamily. Heterodimer of LeuC and LeuD.

The catalysed reaction is (2R,3S)-3-isopropylmalate = (2S)-2-isopropylmalate. It functions in the pathway amino-acid biosynthesis; L-leucine biosynthesis; L-leucine from 3-methyl-2-oxobutanoate: step 2/4. Catalyzes the isomerization between 2-isopropylmalate and 3-isopropylmalate, via the formation of 2-isopropylmaleate. The protein is 3-isopropylmalate dehydratase small subunit of Shigella dysenteriae serotype 1 (strain Sd197).